Consider the following 209-residue polypeptide: Mitochondrial import inner membrane translocase subunit Tim23 (209 aa).

3 helical membrane passes run 73–93, 125–145, and 181–197; these read FELA…FGAM, ALWA…GVII, and GLAG…YNNW.

It belongs to the Tim17/Tim22/Tim23 family. Component of the TIM23 complex at least composed of TIMM23, TIMM17 (TIMM17A or TIMM17B) and TIMM50; within this complex, directly interacts with TIMM50. The complex interacts with the TIMM44 component of the PAM complex and with DNAJC15. Upon mitochondrial depolarization, interacts with PINK1; the interaction is required for PINK1 accumulation at the outer mitochondrial membrane, kinase activation by autophosphorylation and PRKN recruitement to mitochondria.

Its subcellular location is the mitochondrion inner membrane. Functionally, essential component of the TIM23 complex, a complex that mediates the translocation of transit peptide-containing proteins across the mitochondrial inner membrane. Has a role in the activation of stress-induced mitophagy by protecting PINK1 from OMA1-mediated degradation and facilitating its accumulation at the outer mitochondrial membrane in response to depolarization. The polypeptide is Mitochondrial import inner membrane translocase subunit Tim23 (Timm23) (Mus musculus (Mouse)).